Reading from the N-terminus, the 276-residue chain is Sulfur carrier protein FdhD (276 aa).

Cysteine 122 functions as the Cysteine persulfide intermediate in the catalytic mechanism. Mo-bis(molybdopterin guanine dinucleotide) is bound at residue 259–264; sequence FCKPGK.

It belongs to the FdhD family.

It is found in the cytoplasm. Its function is as follows. Required for formate dehydrogenase (FDH) activity. Acts as a sulfur carrier protein that transfers sulfur from IscS to the molybdenum cofactor prior to its insertion into FDH. The chain is Sulfur carrier protein FdhD from Photorhabdus laumondii subsp. laumondii (strain DSM 15139 / CIP 105565 / TT01) (Photorhabdus luminescens subsp. laumondii).